We begin with the raw amino-acid sequence, 1244 residues long: Ras-specific guanine nucleotide-releasing factor 2 (1244 aa).

The 108-residue stretch at 22 to 129 folds into the PH 1 domain; sequence EGTKRGYLSK…WVEAIQQASY (108 aa). A coiled-coil region spans residues 147–189; sequence VQIVETEKVAANQLRTQLEDQDTEIERLKAEIIALNKTKERMR. Residues 201 to 230 enclose the IQ domain; it reads DIKKIKKVQSFMRGWLCRRKWKIIVQDYIC. The DH domain occupies 239–425; sequence KRNQIVFNMV…EELSRVMHDE (187 aa). Residues 466–584 form the PH 2 domain; the sequence is PSVERGKLSK…WTSDISQCID (119 aa). Residues 631–745 form the N-terminal Ras-GEF domain; sequence KVPQIRYASV…PVRTRKLSLN (115 aa). Disordered regions lie at residues 704-743, 759-814, and 843-879; these read NRSG…RKLS, TTSS…NAEV, and PESP…AENS. The segment covering 706-715 has biased composition (basic and acidic residues); the sequence is SGDHVNDKSP. The span at 728–743 shows a compositional bias: polar residues; sequence SISSRTSSPVRTRKLS. 2 stretches are compositionally biased toward low complexity: residues 759-774 and 781-806; these read TTSS…ANPT and NNNN…QSPG. In terms of domain architecture, Ras-GEF spans 1009–1241; the sequence is SAMEIAEQIT…YDLSLKIEPR (233 aa).

Its subcellular location is the cytoplasm. It localises to the cell membrane. The protein resides in the endoplasmic reticulum membrane. In terms of biological role, functions as a calcium-regulated nucleotide exchange factor activating both Ras and rac1 through the exchange of bound GDP for GTP. May function in synaptic plasticity. The polypeptide is Ras-specific guanine nucleotide-releasing factor 2 (rasgrf2) (Danio rerio (Zebrafish)).